A 420-amino-acid chain; its full sequence is Probable protein phosphatase 2C 76 (420 aa).

Residues 101-347 (SCGYCSFRGK…DNITCIVVKF (247 aa)) form the PPM-type phosphatase domain. Positions 137, 138, 299, and 338 each coordinate Mn(2+). Positions 353–420 (ESPKIETNAM…PETKGEKAGE (68 aa)) are disordered. Basic and acidic residues predominate over residues 403–420 (PDPKPETEPETKGEKAGE).

Belongs to the PP2C family. Mg(2+) serves as cofactor. It depends on Mn(2+) as a cofactor.

It catalyses the reaction O-phospho-L-seryl-[protein] + H2O = L-seryl-[protein] + phosphate. The enzyme catalyses O-phospho-L-threonyl-[protein] + H2O = L-threonyl-[protein] + phosphate. The polypeptide is Probable protein phosphatase 2C 76 (Arabidopsis thaliana (Mouse-ear cress)).